Here is a 200-residue protein sequence, read N- to C-terminus: Proteasome subunit beta 2 (200 aa).

A propeptide spans 1–7 (MEEKKTG) (removed in mature form; by autocatalysis). Thr8 acts as the Nucleophile in catalysis.

Belongs to the peptidase T1B family. The 20S proteasome core is composed of 14 alpha and 14 beta subunits that assemble into four stacked heptameric rings, resulting in a barrel-shaped structure. The two inner rings, each composed of seven catalytic beta subunits, are sandwiched by two outer rings, each composed of seven alpha subunits. The catalytic chamber with the active sites is on the inside of the barrel. Has a gated structure, the ends of the cylinder being occluded by the N-termini of the alpha-subunits. Is capped at one or both ends by the proteasome regulatory ATPase, PAN.

The protein localises to the cytoplasm. It catalyses the reaction Cleavage of peptide bonds with very broad specificity.. The formation of the proteasomal ATPase PAN-20S proteasome complex, via the docking of the C-termini of PAN into the intersubunit pockets in the alpha-rings, triggers opening of the gate for substrate entry. Interconversion between the open-gate and close-gate conformations leads to a dynamic regulation of the 20S proteasome proteolysis activity. In terms of biological role, component of the proteasome core, a large protease complex with broad specificity involved in protein degradation. This chain is Proteasome subunit beta 2, found in Thermococcus gammatolerans (strain DSM 15229 / JCM 11827 / EJ3).